A 214-amino-acid polypeptide reads, in one-letter code: 3,4-dihydroxy-2-butanone 4-phosphate synthase (214 aa).

D-ribulose 5-phosphate contacts are provided by residues 37–38, Asp-42, 150–154, and Glu-174; these read RE and RRGHT. Position 38 (Glu-38) interacts with Mg(2+). His-153 contacts Mg(2+).

It belongs to the DHBP synthase family. In terms of assembly, homodimer. Mg(2+) is required as a cofactor. Requires Mn(2+) as cofactor.

It catalyses the reaction D-ribulose 5-phosphate = (2S)-2-hydroxy-3-oxobutyl phosphate + formate + H(+). Its pathway is cofactor biosynthesis; riboflavin biosynthesis; 2-hydroxy-3-oxobutyl phosphate from D-ribulose 5-phosphate: step 1/1. In terms of biological role, catalyzes the conversion of D-ribulose 5-phosphate to formate and 3,4-dihydroxy-2-butanone 4-phosphate. This is 3,4-dihydroxy-2-butanone 4-phosphate synthase from Pasteurella multocida (strain Pm70).